We begin with the raw amino-acid sequence, 192 residues long: MFNKTLLGLTVGALMFTAGSAVAAEYKIDKEGQHAFIEFRIKHLGYSWLYGSFNDFDGSFTFDEKNPAADKVNVVINTNSVDTNHAERDKHLRSKEFLNVGKFPQATFTSTEVKKNAEGYTVVGNLTLNGVTKPVTLESKLTGQGNDPWGGYRAGFEANGNIKLKDFNITTDLGPASQEVELILSVEGVRAK.

The signal sequence occupies residues 1–23; that stretch reads MFNKTLLGLTVGALMFTAGSAVA.

The protein belongs to the UPF0312 family. Type 1 subfamily.

Its subcellular location is the periplasm. The sequence is that of UPF0312 protein YE1254 from Yersinia enterocolitica serotype O:8 / biotype 1B (strain NCTC 13174 / 8081).